A 416-amino-acid chain; its full sequence is 2-aminoadipate transaminase (416 aa).

Pyridoxal 5'-phosphate contacts are provided by residues 102–103 (GA) and Q233. N6-(pyridoxal phosphate)lysine is present on K259. T288 provides a ligand contact to pyridoxal 5'-phosphate.

Belongs to the class-III pyridoxal-phosphate-dependent aminotransferase family. It depends on pyridoxal 5'-phosphate as a cofactor.

The enzyme catalyses L-2-aminoadipate + 2-oxoglutarate = 2-oxoadipate + L-glutamate. The catalysed reaction is 5-aminopentanoate + 2-oxoglutarate = 5-oxopentanoate + L-glutamate. The protein operates within amino-acid degradation. Its function is as follows. Catalyzes the conversion of 2-aminoadipate (2AA) to 2-oxoadipate (2OA). Is most active on L-2-aminoadipate (L-2AA) and shows only weak activity on the enantiomer, D-2-aminoadipate (D-2AA). Shows moderate activity on 5-aminovalerate (5AVA) and weak activity toward 4-aminobutyrate (GABA). Is involved in a D-lysine catabolic pathway. The protein is 2-aminoadipate transaminase of Pseudomonas putida (strain ATCC 47054 / DSM 6125 / CFBP 8728 / NCIMB 11950 / KT2440).